Reading from the N-terminus, the 327-residue chain is Phenylalanine--tRNA ligase alpha subunit (327 aa).

Mg(2+) is bound at residue Glu-252.

The protein belongs to the class-II aminoacyl-tRNA synthetase family. Phe-tRNA synthetase alpha subunit type 1 subfamily. In terms of assembly, tetramer of two alpha and two beta subunits. Mg(2+) is required as a cofactor.

It localises to the cytoplasm. The catalysed reaction is tRNA(Phe) + L-phenylalanine + ATP = L-phenylalanyl-tRNA(Phe) + AMP + diphosphate + H(+). This Vibrio cholerae serotype O1 (strain ATCC 39541 / Classical Ogawa 395 / O395) protein is Phenylalanine--tRNA ligase alpha subunit.